We begin with the raw amino-acid sequence, 105 residues long: Small ribosomal subunit protein uS10 (105 aa).

Belongs to the universal ribosomal protein uS10 family. As to quaternary structure, part of the 30S ribosomal subunit.

In terms of biological role, involved in the binding of tRNA to the ribosomes. The protein is Small ribosomal subunit protein uS10 of Crocosphaera subtropica (strain ATCC 51142 / BH68) (Cyanothece sp. (strain ATCC 51142)).